The sequence spans 317 residues: Glycine--tRNA ligase alpha subunit (317 aa).

This sequence belongs to the class-II aminoacyl-tRNA synthetase family. As to quaternary structure, tetramer of two alpha and two beta subunits.

The protein resides in the cytoplasm. The enzyme catalyses tRNA(Gly) + glycine + ATP = glycyl-tRNA(Gly) + AMP + diphosphate. The polypeptide is Glycine--tRNA ligase alpha subunit (Acidovorax ebreus (strain TPSY) (Diaphorobacter sp. (strain TPSY))).